A 407-amino-acid chain; its full sequence is Imidazolonepropionase (407 aa).

Fe(3+) contacts are provided by His68 and His70. Residues His68 and His70 each coordinate Zn(2+). Arg77, Tyr140, and His173 together coordinate 4-imidazolone-5-propanoate. Tyr140 contacts N-formimidoyl-L-glutamate. His238 contacts Fe(3+). His238 contacts Zn(2+). 4-imidazolone-5-propanoate is bound at residue Gln241. Asp313 is a Fe(3+) binding site. A Zn(2+)-binding site is contributed by Asp313. Residues Asn315 and Gly317 each contribute to the N-formimidoyl-L-glutamate site. Thr318 contributes to the 4-imidazolone-5-propanoate binding site.

This sequence belongs to the metallo-dependent hydrolases superfamily. HutI family. Requires Zn(2+) as cofactor. It depends on Fe(3+) as a cofactor.

The protein resides in the cytoplasm. It carries out the reaction 4-imidazolone-5-propanoate + H2O = N-formimidoyl-L-glutamate. Its pathway is amino-acid degradation; L-histidine degradation into L-glutamate; N-formimidoyl-L-glutamate from L-histidine: step 3/3. Catalyzes the hydrolytic cleavage of the carbon-nitrogen bond in imidazolone-5-propanoate to yield N-formimidoyl-L-glutamate. It is the third step in the universal histidine degradation pathway. The protein is Imidazolonepropionase of Burkholderia pseudomallei (strain 668).